Consider the following 376-residue polypeptide: MEPSFAPYAAHSSQTRGRVHREAPAAPRSEFQRDRDRIIHSTAFRRLEYKTQVFVNHEGDLFRTRLTHSIEVAQIGRTIARLLNLNEDLVEAVALAHDLGHTPFGHAGQDALNACMREHGGFEHNLQSLRVVDLLEERYAEFDGLNLTFEAREGILKHCALSNAEKLGEVGRRFIDKKQPSLEAQVANLADEIAYNNHDVDDGLRSGLITLEQLSEVTIFGRHLAEVRRKHPTLQGRRVVTETVRRIINALILDLVDTTRTNVVNSGVETLDDVRNAPPLAAFSPAILEQHRELKRFLLHHLYRHYKVARMSTKAGRIISDLYAAFTGDARLLPPEHQARESLEGTRAVADYIAGMTDRYAMREHRRIYAVEEIYD.

The tract at residues 1–32 (MEPSFAPYAAHSSQTRGRVHREAPAAPRSEFQ) is disordered. The region spanning 65–196 (RLTHSIEVAQ…ANLADEIAYN (132 aa)) is the HD domain.

The protein belongs to the dGTPase family. Type 2 subfamily.

In Thiobacillus denitrificans (strain ATCC 25259 / T1), this protein is Deoxyguanosinetriphosphate triphosphohydrolase-like protein.